Consider the following 348-residue polypeptide: Methylthioribose-1-phosphate isomerase (348 aa).

Residues 48-50 (RGA), R90, and Q195 contribute to the substrate site. D236 serves as the catalytic Proton donor. 246–247 (NK) provides a ligand contact to substrate.

Belongs to the eIF-2B alpha/beta/delta subunits family. MtnA subfamily.

It carries out the reaction 5-(methylsulfanyl)-alpha-D-ribose 1-phosphate = 5-(methylsulfanyl)-D-ribulose 1-phosphate. It participates in amino-acid biosynthesis; L-methionine biosynthesis via salvage pathway; L-methionine from S-methyl-5-thio-alpha-D-ribose 1-phosphate: step 1/6. Functionally, catalyzes the interconversion of methylthioribose-1-phosphate (MTR-1-P) into methylthioribulose-1-phosphate (MTRu-1-P). This is Methylthioribose-1-phosphate isomerase from Exiguobacterium sibiricum (strain DSM 17290 / CCUG 55495 / CIP 109462 / JCM 13490 / 255-15).